A 368-amino-acid chain; its full sequence is Lipoyl synthase, chloroplastic (368 aa).

2 disordered regions span residues 1–30 and 42–61; these read MQSSLARPLRPPVLAGCGGRRGHGAPRGSV and PTVGTASRAPAGPYTGRDPE. [4Fe-4S] cluster contacts are provided by cysteine 94, cysteine 99, cysteine 105, cysteine 131, cysteine 135, cysteine 138, and serine 346. The Radical SAM core domain occupies 114–335; it reads GEGDGIATAT…KEYGESVGFR (222 aa).

Belongs to the radical SAM superfamily. Lipoyl synthase family. Requires [4Fe-4S] cluster as cofactor.

The protein resides in the plastid. It localises to the chloroplast. The catalysed reaction is [[Fe-S] cluster scaffold protein carrying a second [4Fe-4S](2+) cluster] + N(6)-octanoyl-L-lysyl-[protein] + 2 oxidized [2Fe-2S]-[ferredoxin] + 2 S-adenosyl-L-methionine + 4 H(+) = [[Fe-S] cluster scaffold protein] + N(6)-[(R)-dihydrolipoyl]-L-lysyl-[protein] + 4 Fe(3+) + 2 hydrogen sulfide + 2 5'-deoxyadenosine + 2 L-methionine + 2 reduced [2Fe-2S]-[ferredoxin]. It functions in the pathway protein modification; protein lipoylation via endogenous pathway; protein N(6)-(lipoyl)lysine from octanoyl-[acyl-carrier-protein]: step 2/2. In terms of biological role, catalyzes the radical-mediated insertion of two sulfur atoms into the C-6 and C-8 positions of the octanoyl moiety bound to the lipoyl domains of lipoate-dependent enzymes, thereby converting the octanoylated domains into lipoylated derivatives. The polypeptide is Lipoyl synthase, chloroplastic (Sorghum bicolor (Sorghum)).